The sequence spans 136 residues: MDVRQLRSLVTLVEVRFSVSRAAECLHLVQSAVTQHLKQLEAELGTRLFVRHGKRLVGLTEVGEQVLRHACEALRQTGNIVAVGREHLEEERRRIRLGATHTQARYVLPPVIRRFAAAYPAVELQIHQGTPGQLVD.

An HTH lysR-type domain is found at 1 to 59; it reads MDVRQLRSLVTLVEVRFSVSRAAECLHLVQSAVTQHLKQLEAELGTRLFVRHGKRLVGL. The segment at residues 19 to 38 is a DNA-binding region (H-T-H motif); the sequence is VSRAAECLHLVQSAVTQHLK.

This sequence belongs to the LysR transcriptional regulatory family.

Functionally, this protein is a positive regulator of gene expression for the cysteine regulon. The protein is HTH-type transcriptional regulator CysB (cysB) of Thiocapsa roseopersicina.